The following is a 439-amino-acid chain: MVDFKLSPSQLEARRHAQAFANTVLTKASAEYSTQKDQLSRFQATRPFYREAVRHGLIKAQVPIPLGGTMESLVHESIILEELFAVEPATSITIVATALGLMPVILCDSPSLQEKFLKPFISGEGEPLASLMHSEPNGTANWLQKGGPGLQTTARKVGNEWVISGEKLWPSNSGGWDYKGADLACVVCRVSDDPSKPQDPNVDPATQIAVLLVTRETIANNKKDAYQILGEPELAGHITTSGPHTRFTEFHVPHENLLCTPGLKAQGLVETAFAMSAALVGAMAIGTARAAFEEALVFAKSDTRGGSKHIIEHQSVADKLIDCKIRLETSRLLVWKAVTTLEDEALEWKVKLEMAMQTKIYTTDVAVECVIDAMKAVGMKSYAKDMSFPRLLNEVMCYPLFDGGNIGLRRRQMQRVMALEDYEPWAATYGSSKVDKSRL.

Residues 131–134 (LMHS), 139–141 (TAN), 169–171 (WPS), Arg304, 313–314 (HQ), 375–379 (KAVGM), and 400–404 (LFDGG) each bind FAD. Residue Asp402 is the Proton acceptor of the active site.

Belongs to the acyl-CoA dehydrogenase family. Homotetramer. FAD serves as cofactor.

The enzyme catalyses a primary nitroalkane + O2 + H2O = an aldehyde + nitrite + H2O2 + H(+). It catalyses the reaction a secondary nitroalkane + O2 + H2O = a ketone + nitrite + H2O2 + H(+). Its activity is regulated as follows. Strongly inhibited by mercury chloride and KCN. Functionally, catalyzes the oxidative denitrification of neutral nitroalkanes, including 3-nitro-2-pentanol, 1-nitropropane, 2-nitropropane, nitroethane and nitrocyclohexane, and may thereby protect the organism against toxic compounds. Has no detectable acyl-CoA dehydrogenase activity. This Fusarium oxysporum (Fusarium vascular wilt) protein is Nitroalkane oxidase.